The chain runs to 264 residues: Thymidylate synthase (264 aa).

R21 serves as a coordination point for dUMP. Residue H51 participates in (6R)-5,10-methylene-5,6,7,8-tetrahydrofolate binding. A dUMP-binding site is contributed by 126 to 127; the sequence is RR. The Nucleophile role is filled by C146. DUMP is bound by residues 166-169, N177, and 207-209; these read RSCD and HLY. Position 169 (D169) interacts with (6R)-5,10-methylene-5,6,7,8-tetrahydrofolate. A263 provides a ligand contact to (6R)-5,10-methylene-5,6,7,8-tetrahydrofolate.

It belongs to the thymidylate synthase family. Bacterial-type ThyA subfamily. Homodimer.

Its subcellular location is the cytoplasm. It carries out the reaction dUMP + (6R)-5,10-methylene-5,6,7,8-tetrahydrofolate = 7,8-dihydrofolate + dTMP. It participates in pyrimidine metabolism; dTTP biosynthesis. Functionally, catalyzes the reductive methylation of 2'-deoxyuridine-5'-monophosphate (dUMP) to 2'-deoxythymidine-5'-monophosphate (dTMP) while utilizing 5,10-methylenetetrahydrofolate (mTHF) as the methyl donor and reductant in the reaction, yielding dihydrofolate (DHF) as a by-product. This enzymatic reaction provides an intracellular de novo source of dTMP, an essential precursor for DNA biosynthesis. In Yersinia pestis bv. Antiqua (strain Antiqua), this protein is Thymidylate synthase.